We begin with the raw amino-acid sequence, 474 residues long: Receptor-transporting protein 3 (474 aa).

Residues M1–M453 lie on the Cytoplasmic side of the membrane. The 3CxxC-type zinc finger occupies T53–G164. A disordered region spans residues S175–T304. Polar residues-rich tracts occupy residues V197–K228 and V259–T304. Residues S454–L474 form a helical membrane-spanning segment.

Belongs to the TMEM7 family. In terms of assembly, interacts with TAS2R16. Expressed predominantly in the liver. Not detected in the olfactory epithelium.

The protein resides in the membrane. Promotes functional cell surface expression of the bitter taste receptors TAS2R16 and TAS2R43. The chain is Receptor-transporting protein 3 (Rtp3) from Mus musculus (Mouse).